The following is a 306-amino-acid chain: Pantothenate kinase (306 aa).

91–98 (GSVAVGKS) contributes to the ATP binding site.

Belongs to the prokaryotic pantothenate kinase family.

It localises to the cytoplasm. The catalysed reaction is (R)-pantothenate + ATP = (R)-4'-phosphopantothenate + ADP + H(+). The protein operates within cofactor biosynthesis; coenzyme A biosynthesis; CoA from (R)-pantothenate: step 1/5. In Streptococcus suis (strain 98HAH33), this protein is Pantothenate kinase.